The chain runs to 282 residues: Protein-export membrane protein SecF (282 aa).

A run of 6 helical transmembrane segments spans residues 16–36 (MVALPLCLLILSVIFLAFNTV), 126–146 (QAIWALLFAFVLMAIVVFVAF), 148–168 (IFIPSVAVVLSAFSDIVITAA), 169–189 (FMDVFGLTLSLGTTAALLMLI), 221–241 (GIIMTTTTLAAVVVMFIVFSL), and 253–273 (VLIIGLIIDMMNTWMLNAGLL).

Belongs to the SecD/SecF family. SecF subfamily. In terms of assembly, part of the protein translocation apparatus. Forms a complex with SecD.

The protein resides in the cell membrane. Functionally, involved in protein export. The sequence is that of Protein-export membrane protein SecF from Methanolacinia petrolearia (strain DSM 11571 / OCM 486 / SEBR 4847) (Methanoplanus petrolearius).